Consider the following 76-residue polypeptide: Esculentin-2-ALb (76 aa).

The signal sequence occupies residues 1–22 (MFTMKKSLLLLFFLGTISLSLC). Positions 23-39 (EEERSADEDDGEKGVKR) are excised as a propeptide. C70 and C76 form a disulfide bridge.

As to expression, expressed by the skin glands.

Its subcellular location is the secreted. Antimicrobial peptide with activity against Gram-positive and Gram-negative bacteria and against fungi. Has been tested against S.aureus (MIC=1.25 ug/mL), B.pumilus (MIC=2.5 ug/mL), B.cereus (MIC=7.5 ug/mL), E.coli (MIC=12.5 ug/mL), B.dysenteriae (MIC=7.5 ug/mL), A.cacoaceticus (MIC=12.5 ug/mL), P.aeruginosa (MIC=50.0 ug/mL) and C.albicans (MIC=2.5 ug/mL). Also shows a weak hemolytic activity. The sequence is that of Esculentin-2-ALb from Amolops loloensis (Lolokou Sucker Frog).